Here is a 77-residue protein sequence, read N- to C-terminus: Acyl carrier protein (77 aa).

Residues 2–77 enclose the Carrier domain; it reads ADVLERVTKI…DAVNYIKSRL (76 aa). Ser37 carries the post-translational modification O-(pantetheine 4'-phosphoryl)serine.

Belongs to the acyl carrier protein (ACP) family. 4'-phosphopantetheine is transferred from CoA to a specific serine of apo-ACP by AcpS. This modification is essential for activity because fatty acids are bound in thioester linkage to the sulfhydryl of the prosthetic group.

It localises to the cytoplasm. The protein operates within lipid metabolism; fatty acid biosynthesis. In terms of biological role, carrier of the growing fatty acid chain in fatty acid biosynthesis. This chain is Acyl carrier protein, found in Geobacillus kaustophilus (strain HTA426).